Reading from the N-terminus, the 288-residue chain is MGEFSTLLQQGNGWFFIPSAILLGILHGLEPGHSKTMMAAFIIAIKGTVKQAVMLGLAATLSHTAIVWLIALGGMYLSRAFTAQSVEPWLQLISAIIILSTACWMFWRTWRGEQQWLAGNHHHDHDHGHDHDHDHDHDHDHDHDHDHDHHGHIHPEGATSKAYQDAHERAHAADIQRRFDGQTVTNGQILLFGLTGGLIPCPAAITVLLICIQLKAFTLGATMVLSFSLGLALTLVTVGVGAAISVQQAAKRWSGFSTLARRAPYFSSILIGLVGVYMGIHGYTGIMQ.

At 1–12 the chain is on the periplasmic side; that stretch reads MGEFSTLLQQGN. A helical membrane pass occupies residues 13–33; sequence GWFFIPSAILLGILHGLEPGH. Over 34–51 the chain is Cytoplasmic; it reads SKTMMAAFIIAIKGTVKQ. Residues 52–72 traverse the membrane as a helical segment; that stretch reads AVMLGLAATLSHTAIVWLIAL. Residues 73-85 lie on the Periplasmic side of the membrane; it reads GGMYLSRAFTAQS. Residues 86–106 traverse the membrane as a helical segment; it reads VEPWLQLISAIIILSTACWMF. Over 107–188 the chain is Cytoplasmic; that stretch reads WRTWRGEQQW…FDGQTVTNGQ (82 aa). Over residues 123–155 the composition is skewed to basic and acidic residues; the sequence is HDHDHGHDHDHDHDHDHDHDHDHDHDHHGHIHP. Residues 123 to 166 are disordered; the sequence is HDHDHGHDHDHDHDHDHDHDHDHDHDHHGHIHPEGATSKAYQDA. A helical membrane pass occupies residues 189-209; it reads ILLFGLTGGLIPCPAAITVLL. At 210–223 the chain is on the periplasmic side; it reads ICIQLKAFTLGATM. Residues 224–244 traverse the membrane as a helical segment; it reads VLSFSLGLALTLVTVGVGAAI. At 245-265 the chain is on the cytoplasmic side; the sequence is SVQQAAKRWSGFSTLARRAPY. Residues 266-286 traverse the membrane as a helical segment; it reads FSSILIGLVGVYMGIHGYTGI. The Periplasmic segment spans residues 287–288; that stretch reads MQ.

Belongs to the NiCoT transporter (TC 2.A.52) family. RcnA subfamily.

The protein localises to the cell inner membrane. Its function is as follows. Efflux system for nickel and cobalt. This is Nickel/cobalt efflux system RcnA (rcnA) from Salmonella paratyphi B (strain ATCC BAA-1250 / SPB7).